The following is a 103-amino-acid chain: Small ribosomal subunit protein uS10 (103 aa).

This sequence belongs to the universal ribosomal protein uS10 family. As to quaternary structure, part of the 30S ribosomal subunit.

Functionally, involved in the binding of tRNA to the ribosomes. This chain is Small ribosomal subunit protein uS10, found in Korarchaeum cryptofilum (strain OPF8).